A 537-amino-acid polypeptide reads, in one-letter code: Methionine--tRNA ligase (537 aa).

The short motif at 11 to 21 (AYPNAAPHIGH) is the 'HIGH' region element. The short motif at 301-305 (KMSKS) is the 'KMSKS' region element. Lys-304 provides a ligand contact to ATP. Positions 503-537 (PPPTGVFPRYQPSEIEGADPVKSSSKRREHNKRRE) are disordered. A compositionally biased stretch (basic residues) spans 526-537 (SSKRREHNKRRE).

The protein belongs to the class-I aminoacyl-tRNA synthetase family. MetG type 2B subfamily. Monomer.

It localises to the cytoplasm. The enzyme catalyses tRNA(Met) + L-methionine + ATP = L-methionyl-tRNA(Met) + AMP + diphosphate. In terms of biological role, is required not only for elongation of protein synthesis but also for the initiation of all mRNA translation through initiator tRNA(fMet) aminoacylation. This Mycobacterium leprae (strain TN) protein is Methionine--tRNA ligase.